A 738-amino-acid polypeptide reads, in one-letter code: Translation initiation factor IF-2 (738 aa).

The segment covering 1–10 (MNSMRISGHQ) has biased composition (polar residues). The interval 1 to 150 (MNSMRISGHQ…PTTVRAPVRP (150 aa)) is disordered. Residues 22-102 (AGGGRGPGNP…GGRGPSGGRG (81 aa)) show a composition bias toward gly residues. The segment covering 103-120 (GDGRRREESPTDHEDGRI) has biased composition (basic and acidic residues). Positions 121-143 (NRSGRSTSTTTTRTSSTLARPTT) are enriched in low complexity. One can recognise a tr-type G domain in the interval 238–405 (PRPPVVTIMG…MILLVADLNE (168 aa)). A G1 region spans residues 247–254 (GHVDHGKT). Residue 247-254 (GHVDHGKT) coordinates GTP. The tract at residues 272–276 (GITQH) is G2. Positions 293–296 (DTPG) are G3. GTP is bound by residues 293-297 (DTPGH) and 347-350 (NKID). The G4 stretch occupies residues 347-350 (NKID). The tract at residues 383-385 (SAK) is G5.

Belongs to the TRAFAC class translation factor GTPase superfamily. Classic translation factor GTPase family. IF-2 subfamily.

Its subcellular location is the cytoplasm. One of the essential components for the initiation of protein synthesis. Protects formylmethionyl-tRNA from spontaneous hydrolysis and promotes its binding to the 30S ribosomal subunits. Also involved in the hydrolysis of GTP during the formation of the 70S ribosomal complex. In Roseiflexus castenholzii (strain DSM 13941 / HLO8), this protein is Translation initiation factor IF-2.